Consider the following 387-residue polypeptide: Cyclin-B1-4 (387 aa).

The disordered stretch occupies residues 1–29 (MASSRVSDLPHQRGIAGEIKPKNVAGHGR).

Belongs to the cyclin family. Cyclin AB subfamily.

The chain is Cyclin-B1-4 (CYCB1-4) from Arabidopsis thaliana (Mouse-ear cress).